Here is a 688-residue protein sequence, read N- to C-terminus: DNA ligase (688 aa).

NAD(+)-binding positions include 42–46 (DAEYD), 91–92 (SL), and Glu-128. The active-site N6-AMP-lysine intermediate is the Lys-130. NAD(+) is bound by residues Arg-151, Glu-188, Lys-305, and Lys-329. Residues Cys-423, Cys-426, Cys-441, and Cys-447 each contribute to the Zn(2+) site. Residues 608–688 (APQGVLAGKT…GMRKLLEGQL (81 aa)) enclose the BRCT domain.

It belongs to the NAD-dependent DNA ligase family. LigA subfamily. Mg(2+) serves as cofactor. It depends on Mn(2+) as a cofactor.

The catalysed reaction is NAD(+) + (deoxyribonucleotide)n-3'-hydroxyl + 5'-phospho-(deoxyribonucleotide)m = (deoxyribonucleotide)n+m + AMP + beta-nicotinamide D-nucleotide.. In terms of biological role, DNA ligase that catalyzes the formation of phosphodiester linkages between 5'-phosphoryl and 3'-hydroxyl groups in double-stranded DNA using NAD as a coenzyme and as the energy source for the reaction. It is essential for DNA replication and repair of damaged DNA. This Paraburkholderia xenovorans (strain LB400) protein is DNA ligase.